Reading from the N-terminus, the 879-residue chain is Oxysterol-binding protein-related protein 5 (879 aa).

Residues 1 to 73 (MKEEAFLRRR…TPSSATKVPP (73 aa)) are disordered. S12 is subject to Phosphoserine. A coiled-coil region spans residues 93–123 (VTKKETLKAQKENYRQEKKRATRQLLSALTD). A PH domain is found at 126-243 (VVIMADSLKI…WLDALELALR (118 aa)). Residues 254–341 (KPGRDGEPGT…TPGAPVRRGT (88 aa)) form a disordered region. 2 stretches are compositionally biased toward basic and acidic residues: residues 300-309 (FSDKSERENP) and 316-325 (TQDHSRKTES). A 1,2-diacyl-sn-glycero-3-phospho-(1D-myo-inositol 4-phosphate)-binding positions include 384-389 (LSRVVL), 446-449 (KPYN), and 478-479 (HH). Residues 384 to 389 (LSRVVL) and N449 each bind a 1,2-diacyl-sn-glycero-3-phospho-L-serine. S504 lines the a 1,2-diacyl-sn-glycero-3-phospho-L-serine pocket. Residues K670, E674, and R678 each contribute to the a 1,2-diacyl-sn-glycero-3-phospho-(1D-myo-inositol 4-phosphate) site. The tract at residues 742–806 (TTFLGSPGPR…FVPGGESPCP (65 aa)) is disordered. Phosphoserine is present on S747. Residues 750–765 (PRHERSGPDQRLRKAS) are compositionally biased toward basic and acidic residues. Positions 766-783 (DQPSGHSQATESSGSTPE) are enriched in polar residues. A helical membrane pass occupies residues 860 to 878 (SWFLLCVFLACQLFINHIL).

It belongs to the OSBP family. Ubiquitously expressed.

The protein localises to the endoplasmic reticulum membrane. Functionally, lipid transporter involved in lipid countertransport between the endoplasmic reticulum and the plasma membrane: specifically exchanges phosphatidylserine with phosphatidylinositol 4-phosphate (PI4P), delivering phosphatidylserine to the plasma membrane in exchange for PI4P, which is degraded by the SAC1/SACM1L phosphatase in the endoplasmic reticulum. Binds phosphatidylserine and PI4P in a mutually exclusive manner. May cooperate with NPC1 to mediate the exit of cholesterol from endosomes/lysosomes. Binds 25-hydroxycholesterol and cholesterol. The protein is Oxysterol-binding protein-related protein 5 (OSBPL5) of Homo sapiens (Human).